A 349-amino-acid polypeptide reads, in one-letter code: ATP phosphoribosyltransferase regulatory subunit (349 aa).

Residues Ala325–Arg349 form a disordered region. Over residues Ala339–Arg349 the composition is skewed to low complexity.

The protein belongs to the class-II aminoacyl-tRNA synthetase family. HisZ subfamily. As to quaternary structure, heteromultimer composed of HisG and HisZ subunits.

The protein resides in the cytoplasm. It participates in amino-acid biosynthesis; L-histidine biosynthesis; L-histidine from 5-phospho-alpha-D-ribose 1-diphosphate: step 1/9. Its function is as follows. Required for the first step of histidine biosynthesis. May allow the feedback regulation of ATP phosphoribosyltransferase activity by histidine. This Anaeromyxobacter dehalogenans (strain 2CP-C) protein is ATP phosphoribosyltransferase regulatory subunit.